Reading from the N-terminus, the 37-residue chain is Tick defensin 2 (37 aa).

Intrachain disulfides connect C4–C26, C11–C34, and C15–C36.

It belongs to the invertebrate defensin family.

It localises to the secreted. Its function is as follows. Antibacterial peptide mostly active against Gram-positive bacteria (MIC=0.24 ug/ml on Bacillus subtilis, and MIC=0.94 ug/ml on Micrococcus luteus, MIC&gt;120 ug/ml on both Escherichia coli and Pseudomonas aeruginosa). The chain is Tick defensin 2 from Ornithodoros savignyi (African eyed tampan).